The primary structure comprises 312 residues: uncharacterized protein (312 aa).

Belongs to the asfivirus CP312R family.

It localises to the virion. This is an uncharacterized protein from African swine fever virus (isolate Warthog/Namibia/Wart80/1980) (ASFV).